The chain runs to 214 residues: Osteoclast-stimulating factor 1 (214 aa).

Serine 2 carries the N-acetylserine modification. In terms of domain architecture, SH3 spans 12–71; the sequence is GQVKVFRALYTFEPRTPDELYFEEGDIIYITDMSDTSWWKGTCKGRTGLIPSNYVAEQAE. ANK repeat units lie at residues 72 to 101, 105 to 135, and 139 to 168; these read SIDN…GVNG, AGST…ELNQ, and LGDT…RTDL. At threonine 200 the chain carries Phosphothreonine. 2 positions are modified to phosphoserine: serine 202 and serine 213.

As to quaternary structure, interacts with SRC and SMN1. Interacts with FASLG.

Its subcellular location is the cytoplasm. Functionally, induces bone resorption, acting probably through a signaling cascade which results in the secretion of factor(s) enhancing osteoclast formation and activity. The sequence is that of Osteoclast-stimulating factor 1 (Ostf1) from Rattus norvegicus (Rat).